Here is a 163-residue protein sequence, read N- to C-terminus: 2-C-methyl-D-erythritol 2,4-cyclodiphosphate synthase (163 aa).

The a divalent metal cation site is built by D15 and H17. 4-CDP-2-C-methyl-D-erythritol 2-phosphate is bound by residues D15–H17 and H41–S42. H49 is a binding site for a divalent metal cation. Residues D63–G65 and T139–E142 each bind 4-CDP-2-C-methyl-D-erythritol 2-phosphate.

The protein belongs to the IspF family. In terms of assembly, homotrimer. The cofactor is a divalent metal cation.

The catalysed reaction is 4-CDP-2-C-methyl-D-erythritol 2-phosphate = 2-C-methyl-D-erythritol 2,4-cyclic diphosphate + CMP. Its pathway is isoprenoid biosynthesis; isopentenyl diphosphate biosynthesis via DXP pathway; isopentenyl diphosphate from 1-deoxy-D-xylulose 5-phosphate: step 4/6. Functionally, involved in the biosynthesis of isopentenyl diphosphate (IPP) and dimethylallyl diphosphate (DMAPP), two major building blocks of isoprenoid compounds. Catalyzes the conversion of 4-diphosphocytidyl-2-C-methyl-D-erythritol 2-phosphate (CDP-ME2P) to 2-C-methyl-D-erythritol 2,4-cyclodiphosphate (ME-CPP) with a corresponding release of cytidine 5-monophosphate (CMP). The protein is 2-C-methyl-D-erythritol 2,4-cyclodiphosphate synthase of Gloeobacter violaceus (strain ATCC 29082 / PCC 7421).